Consider the following 559-residue polypeptide: Hepatocyte nuclear factor 1-alpha (559 aa).

The 32-residue stretch at 13–44 folds into the HNF-p1 domain; sequence GPGRLSALQEQLIWALLGSGLSREVLVHALGE. A dimerization region spans residues 14-43; the sequence is PGRLSALQEQLIWALLGSGLSREVLVHALG. A compositionally biased stretch (basic and acidic residues) spans 49–62; that stretch reads RVTPGAEKGDRGDG. The segment at 49-73 is disordered; sequence RVTPGAEKGDRGDGESSEEGEMDFP. The POU-specific atypical domain occupies 78-173; that stretch reads QELEALAPEE…ISQQFTNARH (96 aa). Interaction with DNA stretches follow at residues 121–123, 134–140, 146–149, 192–195, 252–254, and 259–262; these read QRE, HLSQHLN, KNQK, RFKW, RVY, and NRRK. The Nuclear localization signal motif lies at 186 to 194; the sequence is RKGRRNRFK. Residues 188 to 268 constitute a DNA-binding region (homeobox; HNF1-type); it reads GRRNRFKWGP…NRRKEEAFRH (81 aa). The interval 492 to 559 is disordered; that stretch reads TDPEEQTDQP…IPAQMVSTAQ (68 aa). Over residues 499–522 the composition is skewed to polar residues; sequence DQPIQEDSLHLQSPSPVPVSSGNL.

The protein belongs to the HNF1 homeobox family. Binds DNA as a dimer. As to expression, expressed in liver, intestine, spleen and kidney.

It is found in the nucleus. Transcriptional activator that regulates the tissue specific expression of multiple genes, especially in pancreas and liver. Binds to the promoter of the albumin gene. In Salmo salar (Atlantic salmon), this protein is Hepatocyte nuclear factor 1-alpha (hnf1a).